The chain runs to 313 residues: Protein sprouty homolog 2 (313 aa).

Residues 1–14 (METRVQHGSGSQAL) show a composition bias toward polar residues. 2 disordered regions span residues 1–31 (METRVQHGSGSQALLQARRDSGRPHGEPDLR) and 54–146 (EYTE…VADG). 2 stretches are compositionally biased toward basic and acidic residues: residues 17–31 (ARRDSGRPHGEPDLR) and 78–89 (KSERPHGLPEHR). The segment covering 108–131 (SRSISTVSTGSRSSTRTSTSSNSS) has biased composition (low complexity). A compositionally biased stretch (polar residues) spans 132-141 (EQRLLGSSSG). One can recognise an SPR domain in the interval 175-289 (RCEDCGKCKC…CYDRVNRPGC (115 aa)).

Belongs to the sprouty family. In terms of tissue distribution, brain and interlimb region.

It is found in the cytoplasm. The protein resides in the membrane. Its function is as follows. Acts as an antagonist of FGF-induced retinal lens fiber differentiation. Inhibits TGFB-induced epithelial-to-mesenchymal transition in retinal lens epithelial cells. May play an important role in FGF-mediated patterning of the mid/hindbrain region by acting to modulate the signaling effects of FGF8. The protein is Protein sprouty homolog 2 (SPRY2) of Gallus gallus (Chicken).